Consider the following 306-residue polypeptide: Glutathione transport system permease protein GsiC (306 aa).

Residues 1–8 lie on the Cytoplasmic side of the membrane; that stretch reads MLNYVIKR. Residues 9–29 traverse the membrane as a helical segment; sequence LLGLIPTLFIVSVLVFLFVHM. At 30–102 the chain is on the periplasmic side; that stretch reads LPGDPARLIA…SRFMPTLWLT (73 aa). The ABC transmembrane type-1 domain occupies 95–292; that stretch reads FMPTLWLTIT…LEFILINLVV (198 aa). A helical transmembrane segment spans residues 103-123; the sequence is ITSMVWAVIFGMAAGIIAAVW. At 124-134 the chain is on the cytoplasmic side; it reads RNRWPDRLSMT. Residues 135–155 form a helical membrane-spanning segment; that stretch reads IAVSGISFPAFALGMLLIQVF. Topologically, residues 156-168 are periplasmic; that stretch reads SVELGWLPTVGAD. A helical transmembrane segment spans residues 169 to 189; the sequence is SWQHYILPSLTLGAAVAAVMA. Residues 190 to 228 are Cytoplasmic-facing; the sequence is RFTRASFVDVLSEDYMRTARAKGVSETWVVLKHGLRNAM. Residues 229 to 249 form a helical membrane-spanning segment; it reads IPVVTMMGLQFGFLLGGSIVV. The Periplasmic portion of the chain corresponds to 250 to 277; the sequence is EKVFNWPGLGRLLVDSVEMRDYPVIQAE. The helical transmembrane segment at 278-298 threads the bilayer; that stretch reads ILLFSLEFILINLVVDVLYAA. Residues 299 to 306 are Cytoplasmic-facing; sequence INPAIRYK.

It belongs to the binding-protein-dependent transport system permease family. As to quaternary structure, the complex is composed of two ATP-binding proteins (GsiA), two transmembrane proteins (GsiC and GsiD) and a solute-binding protein (GsiB).

It is found in the cell inner membrane. Part of the ABC transporter complex GsiABCD involved in glutathione import. Probably responsible for the translocation of the substrate across the membrane. The chain is Glutathione transport system permease protein GsiC from Escherichia coli O6:H1 (strain CFT073 / ATCC 700928 / UPEC).